A 98-amino-acid chain; its full sequence is Plastocyanin (98 aa).

In terms of domain architecture, Plastocyanin-like spans 1–98; the sequence is AQIVKLGGDD…AGMKMTITVQ (98 aa). The Cu cation site is built by histidine 38, cysteine 83, histidine 86, and methionine 91.

It belongs to the plastocyanin family. It depends on Cu(2+) as a cofactor.

The protein resides in the plastid. The protein localises to the chloroplast thylakoid membrane. Its function is as follows. Participates in electron transfer between P700 and the cytochrome b6-f complex in photosystem I. This Ulva arasakii (Sea lettuce) protein is Plastocyanin (PETE).